The chain runs to 152 residues: Large ribosomal subunit protein uL13 (152 aa).

The protein belongs to the universal ribosomal protein uL13 family. In terms of assembly, part of the 50S ribosomal subunit.

In terms of biological role, this protein is one of the early assembly proteins of the 50S ribosomal subunit, although it is not seen to bind rRNA by itself. It is important during the early stages of 50S assembly. The polypeptide is Large ribosomal subunit protein uL13 (Borreliella afzelii (strain PKo) (Borrelia afzelii)).